Here is a 161-residue protein sequence, read N- to C-terminus: uncharacterized protein (161 aa).

It to R.leguminosarum PsiB.

This is an uncharacterized protein from Sinorhizobium fredii (strain NBRC 101917 / NGR234).